Reading from the N-terminus, the 354-residue chain is MIDRLEKIQEKYLRISEELNQAKDPSSLKNLYKERSRLTPLYLKVEEYLKIYKDRKDAEELIQSEKDEEMHSMLKEEIREANLKLETLEREFEILLLPPDPNSGKNILVEIRAGTGGEEAGLFVADLFRMYSKFADKQKIKTEIIDSSPTGIGGLKEIIFALEDDRAYDLFKFEGGTHRVQRIPSTESGGRIHTSAVTVAVLPEADEEEVQINESDLRIDVYRSSGAGGQHVNTTDSAVRITHIPTGVVVACQDEKSQHKNKAKALRILSARILEKQAEDKKQASDAIKKQMIGSGDRSERVRTYNFPQGRCTDHRIGFTSHNLSAIMEGDLDELIGALTEEDRVRKISETQTH.

At Gln-230 the chain carries N5-methylglutamine.

It belongs to the prokaryotic/mitochondrial release factor family. Methylated by PrmC. Methylation increases the termination efficiency of RF1.

The protein localises to the cytoplasm. In terms of biological role, peptide chain release factor 1 directs the termination of translation in response to the peptide chain termination codons UAG and UAA. This Leptospira interrogans serogroup Icterohaemorrhagiae serovar copenhageni (strain Fiocruz L1-130) protein is Peptide chain release factor 1.